The primary structure comprises 374 residues: Dispase autolysis-inducing protein (374 aa).

An N-terminal signal peptide occupies residues 1–26 (MKRMGWAVTAAVTTIVLAQSSLAAQA).

The protein resides in the secreted. Its function is as follows. Induces autolysis of dispase and thermolysin. The polypeptide is Dispase autolysis-inducing protein (daip) (Streptomyces mobaraensis (Streptoverticillium mobaraense)).